Here is a 904-residue protein sequence, read N- to C-terminus: uncharacterized protein (904 aa).

Disordered stretches follow at residues 247-275 and 328-360; these read KIGK…SLEF and GDSQ…HHFS. A compositionally biased stretch (polar residues) spans 342–360; that stretch reads GAQTLSPTSHPSSANHHFS. A helical transmembrane segment spans residues 778–798; the sequence is VVQGMILMFAGGKLIFGGRVL.

The protein resides in the membrane. This is an uncharacterized protein from Homo sapiens (Human).